A 378-amino-acid chain; its full sequence is RIB43A-like with coiled-coils protein 1 (378 aa).

2 coiled-coil regions span residues 153–250 (RMQQ…VTSD) and 279–334 (EQRA…CAEF).

It belongs to the RIB43A family. Microtubule inner protein component of sperm flagellar doublet microtubules.

Its subcellular location is the cytoplasm. The protein localises to the cytoskeleton. The protein resides in the flagellum axoneme. This Rattus norvegicus (Rat) protein is RIB43A-like with coiled-coils protein 1 (Ribc1).